The chain runs to 583 residues: Malonate--CoA ligase ACSF3, mitochondrial (583 aa).

Residues 1 to 27 (MPPHLALPFRRLFWSLASSQLIPRRHR) constitute a mitochondrion transit peptide. ATP-binding positions include 202–210 (TSGTTGRPK), D455, R469, and K561.

Belongs to the ATP-dependent AMP-binding enzyme family.

It localises to the mitochondrion. It catalyses the reaction tetracosanoate + ATP + CoA = tetracosanoyl-CoA + AMP + diphosphate. The catalysed reaction is malonate + ATP + CoA = malonyl-CoA + AMP + diphosphate. Catalyzes the initial reaction in intramitochondrial fatty acid synthesis, by activating malonate and methylmalonate, but not acetate, into their respective CoA thioester. May have some preference toward very-long-chain substrates. The polypeptide is Malonate--CoA ligase ACSF3, mitochondrial (Mus musculus (Mouse)).